The following is a 289-amino-acid chain: 7-methylguanosine phosphate-specific 5'-nucleotidase (289 aa).

Catalysis depends on aspartate 38, which acts as the Nucleophile. 2 residues coordinate Mg(2+): aspartate 38 and aspartate 40. The active-site Proton donor is the aspartate 40. Glutamate 85 contacts CMP. Glutamate 85 is a binding site for N(7)-methyl-GMP. Substrate-binding positions include 153 to 154 and lysine 202; that span reads SA. Residue aspartate 227 coordinates Mg(2+).

The protein belongs to the pyrimidine 5'-nucleotidase family. In terms of assembly, monomer.

It localises to the cytoplasm. It catalyses the reaction N(7)-methyl-GMP + H2O = N(7)-methylguanosine + phosphate. The catalysed reaction is CMP + H2O = cytidine + phosphate. It carries out the reaction a ribonucleoside 5'-phosphate + H2O = a ribonucleoside + phosphate. In terms of biological role, specifically hydrolyzes 7-methylguanosine monophosphate (m(7)GMP) to 7-methylguanosine and inorganic phosphate. The specific activity for m(7)GMP may protect cells against undesired salvage of m(7)GMP and its incorporation into nucleic acids. Also has weak activity for CMP. UMP and purine nucleotides are poor substrates. This is 7-methylguanosine phosphate-specific 5'-nucleotidase (NT5C3B) from Gallus gallus (Chicken).